The sequence spans 122 residues: MVKLTSIAAGVAAIAAGASAAATTTLSQSDERVNLVELGVYVSDIRAHLAEYYSFQAAHPTETYPVEIAEAVFNYGDFTTMLTGIPADQVTRVITGVPWYSSRLKPAISSALSADGIYTIAN.

The chain crosses the membrane as a helical span at residues 7-24; the sequence is IAAGVAAIAAGASAAATT.

Belongs to the SRP1/TIP1 family. Seripauperin subfamily.

Its subcellular location is the membrane. The protein is Seripauperin-5 (PAU5) of Saccharomyces cerevisiae (strain ATCC 204508 / S288c) (Baker's yeast).